Reading from the N-terminus, the 209-residue chain is uncharacterized protein (209 aa).

May influence the expression of the nuc gene. This is an uncharacterized protein from Shigella flexneri.